The sequence spans 623 residues: Prothrombin (623 aa).

The signal sequence occupies residues 1–24 (MAHVGGLWLHGCLALAVLVSLVHS). Residues 25 to 43 (QHVFMAPQQALSLLQRARR) constitute a propeptide that is removed on maturation. In terms of domain architecture, Gla spans 44-90 (ANSGFFEEMRKGNLERECVEEQCSREEAYEALESPSETDAFWAKYTA). 10 positions are modified to 4-carboxyglutamate: E50, E51, E58, E60, E63, E64, E69, E70, E73, and E76. An intrachain disulfide couples C61 to C66. 11 cysteine pairs are disulfide-bonded: C91-C104, C109-C187, C130-C170, C158-C182, C214-C292, C235-C275, C263-C287, C337-C483, C392-C408, C537-C551, and C565-C595. Kringle domains follow at residues 108 to 187 (NCAE…IPVC) and 213 to 292 (TCVP…LDYC). N-linked (GlcNAc...) asparagine glycans are attached at residues N120 and N144. The region spanning 365 to 619 (IVEGSDAEIG…LKKWMQKVID (255 aa)) is the Peptidase S1 domain. The active-site Charge relay system is H407. N417 carries an N-linked (GlcNAc...) asparagine glycan. D463 functions as the Charge relay system in the catalytic mechanism. Positions 552-574 (AGYKPDEGKRGDACEGDSGGPFV) are high affinity receptor-binding region which is also known as the TP508 peptide. Residue S569 is the Charge relay system of the active site.

This sequence belongs to the peptidase S1 family. In terms of assembly, heterodimer (named alpha-thrombin) of a light and a heavy chain; disulfide-linked. Forms a heterodimer with SERPINA5. In plasma, interacts (via N-terminus) with alpha-1-microglobulin; this interaction does not prevent the activation of prothrombin to thrombin. The gamma-carboxyglutamyl residues, which bind calcium ions, result from the carboxylation of glutamyl residues by a microsomal enzyme, the vitamin K-dependent carboxylase. The modified residues are necessary for the calcium-dependent interaction with a negatively charged phospholipid surface, which is essential for the conversion of prothrombin to thrombin. In terms of processing, in the penultimate step of the coagulation cascade, prothrombin is converted to thrombin by the prothrombinase complex composed of factor Xa (F10), cofactor Va (F5), and phospholipids. This activation requires factor Xa-catalyzed sequential cleavage at 2 sites, Arg-315 and Arg-364, along 2 possible pathways. In the first pathway, the first cleavage occurs at Arg-315, leading to the formation of the inactive intermediate prethrombin-2. This pathway preferentially occurs on platelets and in the absence of cofactor Va. In the second pathway, the first cleavage occurs at Arg-364, which separates protease domain into 2 chains that remain connected through a disulfide bond and generates the active intermediate meizothrombin. The presence of cofactor Va directs activation along the meizothrombin pathway and greatly accelerates the rate of cleavage at Arg-364, but has a smaller effect on the cleavage of meizothrombin at Arg-315. Meizothrombin accumulates as an intermediate when prothrombinase is assembled on the membrane of red blood cells.

It catalyses the reaction Selective cleavage of Arg-|-Gly bonds in fibrinogen to form fibrin and release fibrinopeptides A and B.. Activity is promoted in the presence of negatively charged surfaces, such as polyphosphate and dextran sulfate. Inhibited by SERPINA5. Its function is as follows. Thrombin, which cleaves bonds after Arg and Lys, converts fibrinogen to fibrin and activates factors V, VII, VIII, XIII, and, in complex with thrombomodulin, protein C. Functions in blood homeostasis, inflammation and wound healing. Activates coagulation factor XI (F11); activation is promoted by the contact with negatively charged surfaces. Triggers the production of pro-inflammatory cytokines, such as MCP-1/CCL2 and IL8/CXCL8, in endothelial cells. This is Prothrombin (F2) from Sus scrofa (Pig).